Here is a 632-residue protein sequence, read N- to C-terminus: MGKVIGIDLGTTNSCVAVMDGKAPKVIENAEGMRTTPSIVAFSDDGERLVGQPAKRQAVTNPERTFFAVKRLVGRRYDDPMVEKDKKLVPYKIVKASNGDAWVEADAKTYSPSQVSAFILQKMKETAEAHLGAKVDQAVITVPAYFNDAQRQATKDAGKIAGLEVLRIINEPTAAALAYGLDKAKAGVIAVYDLGGGTFDVSILEIGDGVFEVKSTNGDTFLGGEDFDMRLVSYLADEFQKEQGINLRNDKLALQRLKEAAEKAKIELSSTTQTEINLPFITADQSGPKHLTMKLTRAKFEALVDDLVQKTIEPCRKALKDAGLTAGEIGEVVLVGGMTRMPKVQEVVKQLFGKEPHKGVNPDEVVAIGAAIQAGVLQGDVKDVLLLDVTPLSLGIETLGGVFTRIIERNTTIPTKKSQVFSTAEDNQNAVTIRVFQGEREMAADNKILGQFDLMGIPPSPRGMPQIEVTFDIDANGIVNVSARDKATGKEQQIRIQASGGLSEADINKMVKDAEINAAEDKKRREAVDAKNHADALVHTTEKALAEHGAKVEEGERRAIEDALGDLREALKGDDAEAIKAKSNTLAQASMKLGEAMYKQQAEADAAKDAAKDDVVDAEFTEVDDDKPKKSA.

Phosphothreonine; by autocatalysis is present on Thr198.

This sequence belongs to the heat shock protein 70 family.

Functionally, acts as a chaperone. This Rhodopseudomonas palustris (strain BisB18) protein is Chaperone protein DnaK.